Here is a 494-residue protein sequence, read N- to C-terminus: Syntaphilin (494 aa).

Residues 1-75 (MAMSLPGSRR…GIKPPTPEQY (75 aa)) form a disordered region. Over residues 7–49 (GSRRTSAGSRRRTSPPVSVRDAYGTSSLSSSSNSGSYKGSDSS) the composition is skewed to low complexity. Positions 79-161 (LQQKEVCIRH…VKNNLIDKDK (83 aa)) form a coiled coil. Disordered regions lie at residues 191–246 (MAKE…SGFA) and 338–398 (CGTD…GQSV). 2 positions are modified to phosphoserine: Ser-200 and Ser-204. Positions 207–217 (RSLTRSSTYTK) are enriched in polar residues. Position 214 is a phosphothreonine (Thr-214). Position 219 is a phosphoserine (Ser-219). Positions 230–246 (GDPSSGSAEDGADSGFA) are enriched in low complexity. A compositionally biased stretch (basic and acidic residues) spans 344–353 (SGDRCPELDA). The helical transmembrane segment at 425–444 (YIVDLLAVVVPAVPTVAWLC) threads the bilayer.

In terms of assembly, binds to STX1A. Interacts with DNM1; this interaction inhibits the binding of DNM1 to AMPH and DNM1-receptor-mediated endocytosis. In terms of tissue distribution, brain specific. Found in synapses.

Its subcellular location is the membrane. The protein localises to the synapse. It localises to the synaptosome. Inhibits SNARE complex formation by absorbing free STX1A. This chain is Syntaphilin, found in Homo sapiens (Human).